The primary structure comprises 521 residues: Bifunctional purine biosynthesis protein PurH (521 aa).

The MGS-like domain maps to 1–147 (MAKISRALIS…KNNADVTVLV (147 aa)).

This sequence belongs to the PurH family.

The catalysed reaction is (6R)-10-formyltetrahydrofolate + 5-amino-1-(5-phospho-beta-D-ribosyl)imidazole-4-carboxamide = 5-formamido-1-(5-phospho-D-ribosyl)imidazole-4-carboxamide + (6S)-5,6,7,8-tetrahydrofolate. It catalyses the reaction IMP + H2O = 5-formamido-1-(5-phospho-D-ribosyl)imidazole-4-carboxamide. It participates in purine metabolism; IMP biosynthesis via de novo pathway; 5-formamido-1-(5-phospho-D-ribosyl)imidazole-4-carboxamide from 5-amino-1-(5-phospho-D-ribosyl)imidazole-4-carboxamide (10-formyl THF route): step 1/1. The protein operates within purine metabolism; IMP biosynthesis via de novo pathway; IMP from 5-formamido-1-(5-phospho-D-ribosyl)imidazole-4-carboxamide: step 1/1. This Geotalea daltonii (strain DSM 22248 / JCM 15807 / FRC-32) (Geobacter daltonii) protein is Bifunctional purine biosynthesis protein PurH.